The primary structure comprises 436 residues: 3-ketoacyl-CoA thiolase (436 aa).

Catalysis depends on Cys-99, which acts as the Acyl-thioester intermediate. Residues His-392 and Cys-422 each act as proton acceptor in the active site.

Belongs to the thiolase-like superfamily. Thiolase family. Heterotetramer of two alpha chains (FadJ) and two beta chains (FadI).

It is found in the cytoplasm. The enzyme catalyses an acyl-CoA + acetyl-CoA = a 3-oxoacyl-CoA + CoA. The protein operates within lipid metabolism; fatty acid beta-oxidation. Functionally, catalyzes the final step of fatty acid oxidation in which acetyl-CoA is released and the CoA ester of a fatty acid two carbons shorter is formed. The chain is 3-ketoacyl-CoA thiolase from Salmonella dublin (strain CT_02021853).